The following is a 47-amino-acid chain: Small, acid-soluble spore protein N (47 aa).

The segment at 1-47 (MSNPRGNPKYFNPNHLGTQPRAAGGNKGKKMQDQSGQHAQVIQTKGE) is disordered. Polar residues predominate over residues 33–47 (DQSGQHAQVIQTKGE).

Belongs to the SspN family.

It localises to the spore core. This is Small, acid-soluble spore protein N from Geobacillus sp. (strain WCH70).